A 338-amino-acid polypeptide reads, in one-letter code: UPF0104 membrane protein MTH_1261 (338 aa).

Transmembrane regions (helical) follow at residues 6–26, 36–56, 124–144, 149–169, 231–251, 254–274, 275–295, and 310–330; these read AILI…IGPG, DPVY…LFTL, LDTF…VLYF, WILA…FLAL, ISFL…TAFG, ISLL…MIPL, LPGG…YAGV, and ISFW…GSSV.

It belongs to the UPF0104 family.

The protein localises to the cell membrane. This Methanothermobacter thermautotrophicus (strain ATCC 29096 / DSM 1053 / JCM 10044 / NBRC 100330 / Delta H) (Methanobacterium thermoautotrophicum) protein is UPF0104 membrane protein MTH_1261.